The following is a 170-amino-acid chain: MSTEEPQADEEDEDLQYFVRIGQTDLDGTKSVERALTDMNGIGRRVARIIAEKAEVDRRDVLGALDEEKIDDVVAAVEEYGDEVPEWLTNHQKDFFTGETTHEIGNDLQMSRRQDINRMKKIDAYRGVRHKRGQKVRGQRTKSTGRTEGTIGVNVEAIKEEQAEDGGDEE.

A compositionally biased stretch (basic residues) spans 128–140; it reads VRHKRGQKVRGQR. The segment at 128-170 is disordered; the sequence is VRHKRGQKVRGQRTKSTGRTEGTIGVNVEAIKEEQAEDGGDEE.

Belongs to the universal ribosomal protein uS13 family. As to quaternary structure, part of the 30S ribosomal subunit. Forms a loose heterodimer with protein S19. Forms two bridges to the 50S subunit in the 70S ribosome.

In terms of biological role, located at the top of the head of the 30S subunit, it contacts several helices of the 16S rRNA. In the 70S ribosome it contacts the 23S rRNA (bridge B1a) and protein L5 of the 50S subunit (bridge B1b), connecting the 2 subunits; these bridges are implicated in subunit movement. In Natronomonas pharaonis (strain ATCC 35678 / DSM 2160 / CIP 103997 / JCM 8858 / NBRC 14720 / NCIMB 2260 / Gabara) (Halobacterium pharaonis), this protein is Small ribosomal subunit protein uS13.